Consider the following 258-residue polypeptide: Probable glycerol uptake facilitator protein (258 aa).

2 helical membrane passes run 11 to 31 (WWFL…NGAV) and 50 to 70 (TVAL…NAIF). The NPA 1 motif lies at 77–79 (NPA). 3 helical membrane passes run 95–115 (ALIW…AMIA), 152–172 (FLTE…ASHF), and 180–200 (VPPG…FGGA). The NPA 2 signature appears at 206–208 (NPA). Residues 233–253 (WIPVIAPLSAGLVLSIIIGFS) traverse the membrane as a helical segment.

It belongs to the MIP/aquaporin (TC 1.A.8) family.

The protein resides in the cell membrane. It carries out the reaction glycerol(in) = glycerol(out). Mediates glycerol diffusion across the cytoplasmic membrane via a pore-type mechanism. The chain is Probable glycerol uptake facilitator protein (glpF) from Mycoplasma genitalium (strain ATCC 33530 / DSM 19775 / NCTC 10195 / G37) (Mycoplasmoides genitalium).